Here is a 68-residue protein sequence, read N- to C-terminus: Small ribosomal subunit protein bS21 (68 aa).

It belongs to the bacterial ribosomal protein bS21 family.

This chain is Small ribosomal subunit protein bS21, found in Ruegeria pomeroyi (strain ATCC 700808 / DSM 15171 / DSS-3) (Silicibacter pomeroyi).